A 210-amino-acid chain; its full sequence is Pyridoxine/pyridoxamine 5'-phosphate oxidase (210 aa).

Residues 7-10 (RQSY) and Lys65 each bind substrate. FMN contacts are provided by residues 60-65 (RIVLIK), 75-76 (FT), Arg81, Lys82, and Gln104. Tyr122, Arg126, and Ser130 together coordinate substrate. FMN contacts are provided by residues 139-140 (QS) and Trp182. Residue 188–190 (RLH) participates in substrate binding. Position 192 (Arg192) interacts with FMN.

It belongs to the pyridoxamine 5'-phosphate oxidase family. In terms of assembly, homodimer. It depends on FMN as a cofactor.

It catalyses the reaction pyridoxamine 5'-phosphate + O2 + H2O = pyridoxal 5'-phosphate + H2O2 + NH4(+). It carries out the reaction pyridoxine 5'-phosphate + O2 = pyridoxal 5'-phosphate + H2O2. Its pathway is cofactor metabolism; pyridoxal 5'-phosphate salvage; pyridoxal 5'-phosphate from pyridoxamine 5'-phosphate: step 1/1. The protein operates within cofactor metabolism; pyridoxal 5'-phosphate salvage; pyridoxal 5'-phosphate from pyridoxine 5'-phosphate: step 1/1. In terms of biological role, catalyzes the oxidation of either pyridoxine 5'-phosphate (PNP) or pyridoxamine 5'-phosphate (PMP) into pyridoxal 5'-phosphate (PLP). The sequence is that of Pyridoxine/pyridoxamine 5'-phosphate oxidase from Bordetella bronchiseptica (strain ATCC BAA-588 / NCTC 13252 / RB50) (Alcaligenes bronchisepticus).